We begin with the raw amino-acid sequence, 462 residues long: Glycine--tRNA ligase (462 aa).

2 residues coordinate substrate: Arg-100 and Glu-174. ATP contacts are provided by residues 206-208, 216-221, 290-291, and 334-337; these read RNE, FRTREF, EL, and GADR. 221-225 is a binding site for substrate; sequence FEQME. Residue 330–334 coordinates substrate; that stretch reads EPSLG.

The protein belongs to the class-II aminoacyl-tRNA synthetase family. Homodimer.

Its subcellular location is the cytoplasm. The enzyme catalyses tRNA(Gly) + glycine + ATP = glycyl-tRNA(Gly) + AMP + diphosphate. Its function is as follows. Catalyzes the attachment of glycine to tRNA(Gly). The protein is Glycine--tRNA ligase of Ruminiclostridium cellulolyticum (strain ATCC 35319 / DSM 5812 / JCM 6584 / H10) (Clostridium cellulolyticum).